The chain runs to 278 residues: Thiazole synthase (278 aa).

K109 (schiff-base intermediate with DXP) is an active-site residue. Residues G170, 197–198 (AG), and 219–220 (NT) each bind 1-deoxy-D-xylulose 5-phosphate.

Belongs to the ThiG family. Homotetramer. Forms heterodimers with either ThiH or ThiS.

It is found in the cytoplasm. It catalyses the reaction [ThiS sulfur-carrier protein]-C-terminal-Gly-aminoethanethioate + 2-iminoacetate + 1-deoxy-D-xylulose 5-phosphate = [ThiS sulfur-carrier protein]-C-terminal Gly-Gly + 2-[(2R,5Z)-2-carboxy-4-methylthiazol-5(2H)-ylidene]ethyl phosphate + 2 H2O + H(+). It participates in cofactor biosynthesis; thiamine diphosphate biosynthesis. Its function is as follows. Catalyzes the rearrangement of 1-deoxy-D-xylulose 5-phosphate (DXP) to produce the thiazole phosphate moiety of thiamine. Sulfur is provided by the thiocarboxylate moiety of the carrier protein ThiS. In vitro, sulfur can be provided by H(2)S. This is Thiazole synthase from Cupriavidus pinatubonensis (strain JMP 134 / LMG 1197) (Cupriavidus necator (strain JMP 134)).